A 60-amino-acid polypeptide reads, in one-letter code: DNA-directed RNA polymerase subunit Rpo6 (60 aa).

Belongs to the archaeal Rpo6/eukaryotic RPB6 RNA polymerase subunit family. In terms of assembly, part of the RNA polymerase complex.

It is found in the cytoplasm. It carries out the reaction RNA(n) + a ribonucleoside 5'-triphosphate = RNA(n+1) + diphosphate. Functionally, DNA-dependent RNA polymerase (RNAP) catalyzes the transcription of DNA into RNA using the four ribonucleoside triphosphates as substrates. This Methanosarcina acetivorans (strain ATCC 35395 / DSM 2834 / JCM 12185 / C2A) protein is DNA-directed RNA polymerase subunit Rpo6.